Here is an 85-residue protein sequence, read N- to C-terminus: Large ribosomal subunit protein bL27 (85 aa).

The segment at 1 to 22 is disordered; that stretch reads MAHKKAGGSTRNGRDSESKRLG.

Belongs to the bacterial ribosomal protein bL27 family.

The polypeptide is Large ribosomal subunit protein bL27 (Vibrio parahaemolyticus serotype O3:K6 (strain RIMD 2210633)).